The chain runs to 536 residues: Adenine deaminase (536 aa).

Positions 1 to 24 are disordered; it reads MTPSPHDLLHCGMNSQDRDETNGD.

This sequence belongs to the metallo-dependent hydrolases superfamily. Adenine deaminase family. Mn(2+) is required as a cofactor.

The catalysed reaction is adenine + H2O + H(+) = hypoxanthine + NH4(+). The polypeptide is Adenine deaminase (Deinococcus radiodurans (strain ATCC 13939 / DSM 20539 / JCM 16871 / CCUG 27074 / LMG 4051 / NBRC 15346 / NCIMB 9279 / VKM B-1422 / R1)).